Reading from the N-terminus, the 156-residue chain is 6,7-dimethyl-8-ribityllumazine synthase (156 aa).

5-amino-6-(D-ribitylamino)uracil-binding positions include Phe-23, 57–59, and 81–83; these read SFE and AVI. (2S)-2-hydroxy-3-oxobutyl phosphate is bound at residue 86–87; it reads GT. Catalysis depends on His-89, which acts as the Proton donor. Tyr-114 lines the 5-amino-6-(D-ribitylamino)uracil pocket. Residue Arg-128 coordinates (2S)-2-hydroxy-3-oxobutyl phosphate.

The protein belongs to the DMRL synthase family. Forms an icosahedral capsid composed of 60 subunits, arranged as a dodecamer of pentamers.

The catalysed reaction is (2S)-2-hydroxy-3-oxobutyl phosphate + 5-amino-6-(D-ribitylamino)uracil = 6,7-dimethyl-8-(1-D-ribityl)lumazine + phosphate + 2 H2O + H(+). It participates in cofactor biosynthesis; riboflavin biosynthesis; riboflavin from 2-hydroxy-3-oxobutyl phosphate and 5-amino-6-(D-ribitylamino)uracil: step 1/2. Functionally, catalyzes the formation of 6,7-dimethyl-8-ribityllumazine by condensation of 5-amino-6-(D-ribitylamino)uracil with 3,4-dihydroxy-2-butanone 4-phosphate. This is the penultimate step in the biosynthesis of riboflavin. The protein is 6,7-dimethyl-8-ribityllumazine synthase of Halorhodospira halophila (strain DSM 244 / SL1) (Ectothiorhodospira halophila (strain DSM 244 / SL1)).